The following is a 309-amino-acid chain: Uridylate-specific endoribonuclease C (309 aa).

An N-terminal signal peptide occupies residues 1-22 (MASGYDFGWIPVLLSLFTLTDA). The 277-residue stretch at 27–303 (VNQELSNIFN…IGTAYPKLLS (277 aa)) folds into the EndoU domain. N-linked (GlcNAc...) asparagine glycosylation is found at asparagine 53 and asparagine 121. Residues histidine 181, histidine 197, and lysine 242 contribute to the active site.

Belongs to the ENDOU family. In terms of assembly, monomer. Requires Mn(2+) as cofactor.

The protein resides in the secreted. It catalyses the reaction ribonucleotidyl-uridine-RNA = a 5'-end dephospho-uridine-RNA + a 3'-end 2',3'-cyclophospho-ribonucleotide-RNA. Functionally, endoribonuclease that cleaves single-stranded RNAs at 5' of uridylates and releases a product with a 2',3'-cyclic phosphate at the 3'-end. The UU and GU sites are more efficiently cleaved than CU and AU sites. The protein is Uridylate-specific endoribonuclease C (endouc) of Danio rerio (Zebrafish).